The chain runs to 278 residues: Protein lyl-1 (278 aa).

Residues 1–46 are disordered; sequence MCPPQARAEVGSAMTEKTEMVCASSPAPAPPSKPASPGPLSTEEVD. The segment covering 27-37 has biased composition (pro residues); sequence APAPPSKPASP. In terms of domain architecture, bHLH spans 149 to 201; the sequence is ARRVFTNSRERWRQQHVNGAFAELRKLLPTHPPDRKLSKNEVLRLAMKYIGFL. The tract at residues 212–278 is disordered; it reads LTSGPSAPGS…EQTSLSPEVR (67 aa). The segment covering 269-278 has biased composition (polar residues); the sequence is EQTSLSPEVR. Ser-274 carries the post-translational modification Phosphoserine.

Efficient DNA binding requires dimerization with another bHLH protein.

Its subcellular location is the nucleus. The polypeptide is Protein lyl-1 (Lyl1) (Mus musculus (Mouse)).